The chain runs to 378 residues: Queuine tRNA-ribosyltransferase (378 aa).

Catalysis depends on D93, which acts as the Proton acceptor. Substrate contacts are provided by residues D93–F97, D147, Q189, and G216. Positions G247 to E253 are RNA binding. D266 (nucleophile) is an active-site residue. An RNA binding; important for wobble base 34 recognition region spans residues T271–R275. The Zn(2+) site is built by C308, C310, C313, and H339.

This sequence belongs to the queuine tRNA-ribosyltransferase family. As to quaternary structure, homodimer. Within each dimer, one monomer is responsible for RNA recognition and catalysis, while the other monomer binds to the replacement base PreQ1. Zn(2+) is required as a cofactor.

It catalyses the reaction 7-aminomethyl-7-carbaguanine + guanosine(34) in tRNA = 7-aminomethyl-7-carbaguanosine(34) in tRNA + guanine. It functions in the pathway tRNA modification; tRNA-queuosine biosynthesis. In terms of biological role, catalyzes the base-exchange of a guanine (G) residue with the queuine precursor 7-aminomethyl-7-deazaguanine (PreQ1) at position 34 (anticodon wobble position) in tRNAs with GU(N) anticodons (tRNA-Asp, -Asn, -His and -Tyr). Catalysis occurs through a double-displacement mechanism. The nucleophile active site attacks the C1' of nucleotide 34 to detach the guanine base from the RNA, forming a covalent enzyme-RNA intermediate. The proton acceptor active site deprotonates the incoming PreQ1, allowing a nucleophilic attack on the C1' of the ribose to form the product. After dissociation, two additional enzymatic reactions on the tRNA convert PreQ1 to queuine (Q), resulting in the hypermodified nucleoside queuosine (7-(((4,5-cis-dihydroxy-2-cyclopenten-1-yl)amino)methyl)-7-deazaguanosine). The chain is Queuine tRNA-ribosyltransferase from Gloeobacter violaceus (strain ATCC 29082 / PCC 7421).